The chain runs to 182 residues: MRYSQIAAKYARALLNVAVELEKTEEYGDILAVVVQLYQKAKQFFDDPTIGAAEHVDRITKFINQIGAHFDKPFWNFLKIVFEKRRQSVLPAILQYYKNMKIESEMKVPVFLTTAYELSEEELKVITDFVRKYTKRNPVFETRIDESLIAGVVIECEGKTFDASVAGRIRNVTRHVLQREVM.

This sequence belongs to the ATPase delta chain family. In terms of assembly, F-type ATPases have 2 components, F(1) - the catalytic core - and F(0) - the membrane proton channel. F(1) has five subunits: alpha(3), beta(3), gamma(1), delta(1), epsilon(1). F(0) has three main subunits: a(1), b(2) and c(10-14). The alpha and beta chains form an alternating ring which encloses part of the gamma chain. F(1) is attached to F(0) by a central stalk formed by the gamma and epsilon chains, while a peripheral stalk is formed by the delta and b chains.

Its subcellular location is the cell inner membrane. F(1)F(0) ATP synthase produces ATP from ADP in the presence of a proton or sodium gradient. F-type ATPases consist of two structural domains, F(1) containing the extramembraneous catalytic core and F(0) containing the membrane proton channel, linked together by a central stalk and a peripheral stalk. During catalysis, ATP synthesis in the catalytic domain of F(1) is coupled via a rotary mechanism of the central stalk subunits to proton translocation. In terms of biological role, this protein is part of the stalk that links CF(0) to CF(1). It either transmits conformational changes from CF(0) to CF(1) or is implicated in proton conduction. The polypeptide is ATP synthase subunit delta (Pseudothermotoga lettingae (strain ATCC BAA-301 / DSM 14385 / NBRC 107922 / TMO) (Thermotoga lettingae)).